A 98-amino-acid polypeptide reads, in one-letter code: DNA-binding protein Fis (98 aa).

Positions 74 to 93 (QTRAATMLGINRGTLRKKLK) form a DNA-binding region, H-T-H motif.

Belongs to the transcriptional regulatory Fis family. In terms of assembly, homodimer.

Functionally, activates ribosomal RNA transcription. Plays a direct role in upstream activation of rRNA promoters. In Histophilus somni (strain 2336) (Haemophilus somnus), this protein is DNA-binding protein Fis.